The following is a 489-amino-acid chain: MSRTKSTKVLIIGAGVSGLKAAETILSKSFLTGDDVLVVEAQNRIGGRLKTTDTSQSKLGINYDLGASWFHDSLNNIVLNHMINDGLLDDEKDVYFDDKDLKTFSSTGEVPIVDKKLNRVLEDIEKYIQLYFNRNLGVPDLSLRDIVAQYFEKYNRLITEEQREYCGRMMRYLEFWFGISWDRISGKYAVTTHQGRNLLNKKGYGYLVESLAKRIPESSLLLEEPVNKIIRNNKDAGKRVLVETINGLQIFCDYLIVTVPQSILSLEESSPYSIKWEPKLPQRLVESINSIHFGALGKVIFEFDRIFWDNSKDRFQIIADHTDGDLSRELTELPKPFTYPLFAVNFGRVHNGKASLVILTQAPLTNYLETHPDQAWQYYQPMLQKLSINDEPIPDPINTIVTDWTTNPYIRGSYSTMYTNDDPSDLIISLSGDFEDLGISEPYIKFAGEHTTSEGTGCVHGAYMSGIYAADCILENIFRNDVTGYTIIG.

The protein to yeast FMS1.

Functionally, may be a flavoprotein with enzymatic activity. The sequence is that of Corticosteroid-binding protein (CBP1) from Candida albicans (strain SC5314 / ATCC MYA-2876) (Yeast).